The following is a 78-amino-acid chain: D-alanyl carrier protein (78 aa).

The region spanning 1 to 78 is the Carrier domain; it reads MAFRENVLEI…MIITQLEALK (78 aa). An O-(pantetheine 4'-phosphoryl)serine modification is found at S36.

It belongs to the DltC family. Post-translationally, 4'-phosphopantetheine is transferred from CoA to a specific serine of apo-DCP.

The protein resides in the cytoplasm. It participates in cell wall biogenesis; lipoteichoic acid biosynthesis. Carrier protein involved in the D-alanylation of lipoteichoic acid (LTA). The loading of thioester-linked D-alanine onto DltC is catalyzed by D-alanine--D-alanyl carrier protein ligase DltA. The DltC-carried D-alanyl group is further transferred to cell membrane phosphatidylglycerol (PG) by forming an ester bond, probably catalyzed by DltD. D-alanylation of LTA plays an important role in modulating the properties of the cell wall in Gram-positive bacteria, influencing the net charge of the cell wall. This chain is D-alanyl carrier protein, found in Listeria monocytogenes serotype 4a (strain HCC23).